We begin with the raw amino-acid sequence, 242 residues long: Ribose-5-phosphate isomerase A (242 aa).

Substrate-binding positions include 39–42, 95–98, and 108–111; these read SGST, DGAD, and KGGG. Glu-117 (proton acceptor) is an active-site residue. Residue Lys-135 participates in substrate binding.

Belongs to the ribose 5-phosphate isomerase family. As to quaternary structure, homodimer.

The catalysed reaction is aldehydo-D-ribose 5-phosphate = D-ribulose 5-phosphate. It functions in the pathway carbohydrate degradation; pentose phosphate pathway; D-ribose 5-phosphate from D-ribulose 5-phosphate (non-oxidative stage): step 1/1. Catalyzes the reversible conversion of ribose-5-phosphate to ribulose 5-phosphate. In Chlamydia trachomatis serovar D (strain ATCC VR-885 / DSM 19411 / UW-3/Cx), this protein is Ribose-5-phosphate isomerase A.